Here is a 264-residue protein sequence, read N- to C-terminus: Tropomyosin Cha f 1.0101 (264 aa).

N-acetylmethionine is present on M1. Disordered regions lie at residues M1–E56 and I92–M126. Residues M1 to K264 are a coiled coil. Positions K12–A45 are enriched in basic and acidic residues.

It belongs to the tropomyosin family. In terms of assembly, homodimer. Expressed in muscle (at protein level). Expressed in claw muscles.

In terms of biological role, tropomyosin, in association with the troponin complex, plays a central role in the calcium dependent regulation of muscle contraction. The polypeptide is Tropomyosin Cha f 1.0101 (Charybdis feriata (Crucifix crab)).